The following is a 94-amino-acid chain: MTINYQFGDVDAHGAMIRALAGLLEAEHQAIISDVLTASDFWGGAGSAACQGFITQLGRNFQVIYEQANAHGQKVQAAGNNMAQTDSAVGSSWA.

It belongs to the WXG100 family. ESAT-6 subfamily.

The protein resides in the secreted. The sequence is that of ESAT-6-like protein EsxI from Mycobacterium tuberculosis (strain CDC 1551 / Oshkosh).